The primary structure comprises 57 residues: Putative secreted protein ML2569.1 (57 aa).

Residues 1–32 (MSRIVAPAAASVVVGLLLGAATIFGMTLMVQQ) form the signal peptide. Residues 34–57 (TKPPLPGGDPQSSVLNRVEYGNRT) form a disordered region.

The chain is Putative secreted protein ML2569.1 from Mycobacterium leprae (strain TN).